Here is a 366-residue protein sequence, read N- to C-terminus: tRNA pseudouridine synthase B (366 aa).

Residues 1-55 form a disordered region; it reads MTVTTPDALLAPHDVQHAGADESAAQIRKPRDNNDPRNANRGGGNGKPRRDKRDV. Catalysis depends on aspartate 92, which acts as the Nucleophile.

Belongs to the pseudouridine synthase TruB family. Type 1 subfamily.

The catalysed reaction is uridine(55) in tRNA = pseudouridine(55) in tRNA. In terms of biological role, responsible for synthesis of pseudouridine from uracil-55 in the psi GC loop of transfer RNAs. The chain is tRNA pseudouridine synthase B from Rhodopseudomonas palustris (strain ATCC BAA-98 / CGA009).